We begin with the raw amino-acid sequence, 362 residues long: Probable endopolygalacturonase B (362 aa).

The N-terminal stretch at 1-20 (MHFLQNAVVAATMGAALAAA) is a signal peptide. Positions 21–25 (APLEK) are excised as a propeptide. Cys28 and Cys43 are disulfide-bonded. PbH1 repeat units follow at residues 155 to 184 (ADHL…DIGQ), 185 to 206 (STYI…AINS), 207 to 227 (GEHI…SIGS), 236 to 257 (VNDV…RIKT), 265 to 287 (VENV…VVEQ), and 299 to 344 (TNGV…DVTG). Residue Asp199 is the Proton donor of the active site. Cys201 and Cys217 are disulfide-bonded. His221 is a catalytic residue. A disulfide bond links Cys327 and Cys332. Asn334 carries N-linked (GlcNAc...) asparagine glycosylation. A disulfide bridge connects residues Cys351 and Cys360.

Belongs to the glycosyl hydrolase 28 family.

It localises to the secreted. It catalyses the reaction (1,4-alpha-D-galacturonosyl)n+m + H2O = (1,4-alpha-D-galacturonosyl)n + (1,4-alpha-D-galacturonosyl)m.. In terms of biological role, involved in maceration and soft-rotting of plant tissue. Hydrolyzes the 1,4-alpha glycosidic bonds of de-esterified pectate in the smooth region of the plant cell wall. The polypeptide is Probable endopolygalacturonase B (pgaB) (Aspergillus niger (strain ATCC MYA-4892 / CBS 513.88 / FGSC A1513)).